The primary structure comprises 271 residues: Repressed by EFG1 protein 1 (271 aa).

A signal peptide spans 1 to 19 (MKITNTLLNAAALLAVTEA). The tract at residues 59–118 (QLTSKTQDSTSPTTSSVNSLTSSSATSYVETTTPAPSSSTLTTSTISSSTASEDSDATPT) is disordered. Residues 67 to 118 (STSPTTSSVNSLTSSSATSYVETTTPAPSSSTLTTSTISSSTASEDSDATPT) are compositionally biased toward low complexity. An SCP domain is found at 128–244 (LKEHNVKRAL…AWRQITVCEY (117 aa)). N-linked (GlcNAc...) asparagine glycosylation occurs at Asn-254.

The protein belongs to the CRISP family.

The protein resides in the secreted. It localises to the cell wall. Cell wall protein involved in cell wall integrity and which plays a role in virulence. The sequence is that of Repressed by EFG1 protein 1 (RBE1) from Candida albicans (strain SC5314 / ATCC MYA-2876) (Yeast).